Reading from the N-terminus, the 562-residue chain is IRK-interacting protein (562 aa).

Disordered regions lie at residues 29 to 61 (ASLMQMKSSPSSNYSLRNPSSSSAASPASRPLP) and 303 to 322 (VVSQENSGGRSSGKKNSEMP). A compositionally biased stretch (low complexity) spans 36-61 (SSPSSNYSLRNPSSSSAASPASRPLP). Residues 246 to 306 (SGVEKLKREL…LREATEVVSQ (61 aa)) adopt a coiled-coil conformation.

As to quaternary structure, interacts with IRK. Highly expressed in root tips, shoot apices and developing flowers.

This chain is IRK-interacting protein, found in Arabidopsis thaliana (Mouse-ear cress).